Reading from the N-terminus, the 131-residue chain is Fluoride-specific ion channel FluC 1 (131 aa).

A run of 4 helical transmembrane segments spans residues 4–24 (ILLIGIGGFIGAVLRYSLSGW), 32–52 (FPLGTLVVNIVGSFFLGLVMY), 66–86 (ILLTIGLLGAFTTLSTFSYES), and 95–115 (LMQLTMNIVATVLFSIFAVYL). 2 residues coordinate Na(+): G74 and T77.

The protein belongs to the fluoride channel Fluc/FEX (TC 1.A.43) family.

Its subcellular location is the cell membrane. The enzyme catalyses fluoride(in) = fluoride(out). With respect to regulation, na(+) is not transported, but it plays an essential structural role and its presence is essential for fluoride channel function. Functionally, fluoride-specific ion channel. Important for reducing fluoride concentration in the cell, thus reducing its toxicity. The chain is Fluoride-specific ion channel FluC 1 from Methanosarcina acetivorans (strain ATCC 35395 / DSM 2834 / JCM 12185 / C2A).